A 457-amino-acid chain; its full sequence is Bifunctional protein GlmU (457 aa).

A pyrophosphorylase region spans residues 1–230 (MPLSLPLHIV…AREVEGVNDL (230 aa)). UDP-N-acetyl-alpha-D-glucosamine-binding positions include 12–15 (LAAG), Lys26, Gln78, 83–84 (GT), 105–107 (YGD), Gly140, Glu155, Asn170, and Asn228. Asp107 is a binding site for Mg(2+). Asn228 is a binding site for Mg(2+). Residues 231 to 251 (WQLTQLERAWQIRAARALCLQ) form a linker region. The N-acetyltransferase stretch occupies residues 252-457 (GARVADPARL…DSWQRPKKKT (206 aa)). Positions 334 and 352 each coordinate UDP-N-acetyl-alpha-D-glucosamine. The Proton acceptor role is filled by His364. Positions 367 and 378 each coordinate UDP-N-acetyl-alpha-D-glucosamine. Residues Ala381, 387 to 388 (NY), Ser406, Ala424, and Arg441 each bind acetyl-CoA.

The protein in the N-terminal section; belongs to the N-acetylglucosamine-1-phosphate uridyltransferase family. In the C-terminal section; belongs to the transferase hexapeptide repeat family. As to quaternary structure, homotrimer. The cofactor is Mg(2+).

The protein localises to the cytoplasm. It carries out the reaction alpha-D-glucosamine 1-phosphate + acetyl-CoA = N-acetyl-alpha-D-glucosamine 1-phosphate + CoA + H(+). It catalyses the reaction N-acetyl-alpha-D-glucosamine 1-phosphate + UTP + H(+) = UDP-N-acetyl-alpha-D-glucosamine + diphosphate. It functions in the pathway nucleotide-sugar biosynthesis; UDP-N-acetyl-alpha-D-glucosamine biosynthesis; N-acetyl-alpha-D-glucosamine 1-phosphate from alpha-D-glucosamine 6-phosphate (route II): step 2/2. The protein operates within nucleotide-sugar biosynthesis; UDP-N-acetyl-alpha-D-glucosamine biosynthesis; UDP-N-acetyl-alpha-D-glucosamine from N-acetyl-alpha-D-glucosamine 1-phosphate: step 1/1. Its pathway is bacterial outer membrane biogenesis; LPS lipid A biosynthesis. Catalyzes the last two sequential reactions in the de novo biosynthetic pathway for UDP-N-acetylglucosamine (UDP-GlcNAc). The C-terminal domain catalyzes the transfer of acetyl group from acetyl coenzyme A to glucosamine-1-phosphate (GlcN-1-P) to produce N-acetylglucosamine-1-phosphate (GlcNAc-1-P), which is converted into UDP-GlcNAc by the transfer of uridine 5-monophosphate (from uridine 5-triphosphate), a reaction catalyzed by the N-terminal domain. The polypeptide is Bifunctional protein GlmU (Xylella fastidiosa (strain 9a5c)).